We begin with the raw amino-acid sequence, 375 residues long: ATP-sensitive inward rectifier potassium channel 15 (375 aa).

The Cytoplasmic portion of the chain corresponds to 1-60 (MDAIHIGMSSTPLVKHTAGAGLKANRPRVMSKSGHSNVRIDKVDGIYLLYLQDLWTTVID). The chain crosses the membrane as a helical span at residues 61–87 (MKWRYKLTLFAATFVMTWFLFGVIYYA). Residues 88-113 (IAFIHGDLEPGEPISNHTPCIMKVDS) lie on the Extracellular side of the membrane. The segment at residues 114 to 130 (LTGAFLFSLESQTTIGY) is an intramembrane region (helical; Pore-forming). The Selectivity filter motif lies at 127 to 132 (TIGYGV). The Extracellular portion of the chain corresponds to 131–139 (GVRSITEEC). The chain crosses the membrane as a helical span at residues 140–165 (PHAIFLLVAQLVITTLIEIFITGTFL). Residues 166 to 375 (AKIARPKKRA…RTLLLQQSNV (210 aa)) lie on the Cytoplasmic side of the membrane.

This sequence belongs to the inward rectifier-type potassium channel (TC 1.A.2.1) family. KCNJ15 subfamily. Can form heteromultimeric channels with Kir5.1/KCNJ16. Interacts with PATJ.

It localises to the membrane. The protein resides in the cell membrane. The enzyme catalyses K(+)(in) = K(+)(out). Its activity is regulated as follows. Channel activity is regulated by variations of cytosolic pH; reversibly inhibited by acidic pH values. Inhibited by Ba(2+) and Cs(+) in a voltage-dependent manner. In terms of biological role, inward rectifier potassium channels are characterized by a greater tendency to allow potassium to flow into the cell rather than out of it. Their voltage dependence is regulated by the concentration of extracellular potassium; as external potassium is raised, the voltage range of the channel opening shifts to more positive voltages. The inward rectification is mainly due to the blockage of outward current by internal magnesium. The protein is ATP-sensitive inward rectifier potassium channel 15 (KCNJ15) of Homo sapiens (Human).